A 209-amino-acid polypeptide reads, in one-letter code: Thiamine-phosphate synthase (209 aa).

Residues 36-40 and Asn-68 each bind 4-amino-2-methyl-5-(diphosphooxymethyl)pyrimidine; that span reads QYRDK. The Mg(2+) site is built by Asp-69 and Asp-87. Residue Thr-106 participates in 4-amino-2-methyl-5-(diphosphooxymethyl)pyrimidine binding. 133 to 135 provides a ligand contact to 2-[(2R,5Z)-2-carboxy-4-methylthiazol-5(2H)-ylidene]ethyl phosphate; sequence SST. Lys-136 is a binding site for 4-amino-2-methyl-5-(diphosphooxymethyl)pyrimidine. Gly-163 contributes to the 2-[(2R,5Z)-2-carboxy-4-methylthiazol-5(2H)-ylidene]ethyl phosphate binding site.

It belongs to the thiamine-phosphate synthase family. It depends on Mg(2+) as a cofactor.

The enzyme catalyses 2-[(2R,5Z)-2-carboxy-4-methylthiazol-5(2H)-ylidene]ethyl phosphate + 4-amino-2-methyl-5-(diphosphooxymethyl)pyrimidine + 2 H(+) = thiamine phosphate + CO2 + diphosphate. It catalyses the reaction 2-(2-carboxy-4-methylthiazol-5-yl)ethyl phosphate + 4-amino-2-methyl-5-(diphosphooxymethyl)pyrimidine + 2 H(+) = thiamine phosphate + CO2 + diphosphate. The catalysed reaction is 4-methyl-5-(2-phosphooxyethyl)-thiazole + 4-amino-2-methyl-5-(diphosphooxymethyl)pyrimidine + H(+) = thiamine phosphate + diphosphate. It functions in the pathway cofactor biosynthesis; thiamine diphosphate biosynthesis; thiamine phosphate from 4-amino-2-methyl-5-diphosphomethylpyrimidine and 4-methyl-5-(2-phosphoethyl)-thiazole: step 1/1. Functionally, condenses 4-methyl-5-(beta-hydroxyethyl)thiazole monophosphate (THZ-P) and 2-methyl-4-amino-5-hydroxymethyl pyrimidine pyrophosphate (HMP-PP) to form thiamine monophosphate (TMP). In Pseudomonas aeruginosa (strain UCBPP-PA14), this protein is Thiamine-phosphate synthase.